The following is a 53-amino-acid chain: Large ribosomal subunit protein bL33A (53 aa).

The protein belongs to the bacterial ribosomal protein bL33 family.

This is Large ribosomal subunit protein bL33A (rpmG1) from Mycoplasma pneumoniae (strain ATCC 29342 / M129 / Subtype 1) (Mycoplasmoides pneumoniae).